We begin with the raw amino-acid sequence, 671 residues long: NADH-quinone oxidoreductase subunit G (671 aa).

Residues 1–78 enclose the 2Fe-2S ferredoxin-type domain; sequence MIKLNVDGSE…GMVIHTDTPM (78 aa). The [2Fe-2S] cluster site is built by Cys-34, Cys-45, Cys-48, and Cys-62. The 4Fe-4S His(Cys)3-ligated-type domain occupies 78-117; that stretch reads MVKKAREGVMEFLLINHPLDCPICDQGGECNLQDQAFRYG. His-94, Cys-98, Cys-101, Cys-107, Cys-146, Cys-149, Cys-152, and Cys-196 together coordinate [4Fe-4S] cluster. The 4Fe-4S Mo/W bis-MGD-type domain maps to 215-271; sequence LKHTASIGVHDAEGSNIRIDSRGDEVMRILPRVNEEINEEWLSDKNRFSYDGLKYQR.

This sequence belongs to the complex I 75 kDa subunit family. [2Fe-2S] cluster serves as cofactor. It depends on [4Fe-4S] cluster as a cofactor.

The enzyme catalyses a quinone + NADH + 5 H(+)(in) = a quinol + NAD(+) + 4 H(+)(out). Its function is as follows. NDH-1 shuttles electrons from NADH, via FMN and iron-sulfur (Fe-S) centers, to quinones in the respiratory chain. Couples the redox reaction to proton translocation (for every two electrons transferred, four hydrogen ions are translocated across the cytoplasmic membrane), and thus conserves the redox energy in a proton gradient. The polypeptide is NADH-quinone oxidoreductase subunit G (nuoG) (Rickettsia conorii (strain ATCC VR-613 / Malish 7)).